The chain runs to 283 residues: ATP phosphoribosyltransferase (283 aa).

Belongs to the ATP phosphoribosyltransferase family. Long subfamily. It depends on Mg(2+) as a cofactor.

It is found in the cytoplasm. The catalysed reaction is 1-(5-phospho-beta-D-ribosyl)-ATP + diphosphate = 5-phospho-alpha-D-ribose 1-diphosphate + ATP. Its pathway is amino-acid biosynthesis; L-histidine biosynthesis; L-histidine from 5-phospho-alpha-D-ribose 1-diphosphate: step 1/9. Feedback inhibited by histidine. Its function is as follows. Catalyzes the condensation of ATP and 5-phosphoribose 1-diphosphate to form N'-(5'-phosphoribosyl)-ATP (PR-ATP). Has a crucial role in the pathway because the rate of histidine biosynthesis seems to be controlled primarily by regulation of HisG enzymatic activity. This is ATP phosphoribosyltransferase from Ignicoccus hospitalis (strain KIN4/I / DSM 18386 / JCM 14125).